Consider the following 232-residue polypeptide: Response regulator MprA (232 aa).

The region spanning 4–118 (RILVVDDDRA…ELLARMRALL (115 aa)) is the Response regulatory domain. D48 is subject to 4-aspartylphosphate. The segment at residues 131 to 229 (SVAMTFSDLS…VRGVGYVLRE (99 aa)) is a DNA-binding region (ompR/PhoB-type).

In terms of processing, phosphorylated and dephosphorylated by MprB.

Its subcellular location is the cytoplasm. Functionally, member of the two-component regulatory system MprB/MprA which contributes to maintaining a balance among several systems involved in stress resistance and is required for establishment and maintenance of persistent infection in the host. Functions as a transcriptional regulator that recognizes a 19-bp nucleotide motif comprizing two loosely conserved 8-bp direct DNA-binding motif repeats separated by a 3-bp spacer region. The sequence is that of Response regulator MprA (mprA) from Mycobacterium ulcerans (strain Agy99).